Consider the following 432-residue polypeptide: Argininosuccinate lyase (432 aa).

It belongs to the lyase 1 family. Argininosuccinate lyase subfamily.

Its subcellular location is the cytoplasm. It catalyses the reaction 2-(N(omega)-L-arginino)succinate = fumarate + L-arginine. The protein operates within amino-acid biosynthesis; L-arginine biosynthesis; L-arginine from L-ornithine and carbamoyl phosphate: step 3/3. The sequence is that of Argininosuccinate lyase from Xanthomonas axonopodis pv. citri (strain 306).